The following is a 296-amino-acid chain: Protoheme IX farnesyltransferase (296 aa).

The next 9 membrane-spanning stretches (helical) occupy residues 8-28 (VTKPGIIFGNLISVVGGFLLA), 35-55 (YPLFLATLVGVSLVVASGCVF), 84-104 (VSLVYATALGIAGFALLYIGA), 107-127 (LAMWLAVMGFVVYVGVYSLYM), 132-152 (VYGTLIGSLSGAAPPVIGYCA), 162-182 (LILLAIFSLWQMPHSYAIAIF), 208-228 (ITVYIVAFMIATLMLTLGGYA), 229-249 (GYKYLIVAAAVSVWWLGMALR), and 263-283 (LFVFSIVAITSLSVMMSIDFS).

The protein belongs to the UbiA prenyltransferase family. Protoheme IX farnesyltransferase subfamily.

Its subcellular location is the cell inner membrane. It catalyses the reaction heme b + (2E,6E)-farnesyl diphosphate + H2O = Fe(II)-heme o + diphosphate. The protein operates within porphyrin-containing compound metabolism; heme O biosynthesis; heme O from protoheme: step 1/1. Functionally, converts heme B (protoheme IX) to heme O by substitution of the vinyl group on carbon 2 of heme B porphyrin ring with a hydroxyethyl farnesyl side group. In Serratia proteamaculans (strain 568), this protein is Protoheme IX farnesyltransferase.